We begin with the raw amino-acid sequence, 254 residues long: 5'/3'-nucleotidase SurE (254 aa).

Positions 9, 10, 40, and 93 each coordinate a divalent metal cation.

Belongs to the SurE nucleotidase family. Requires a divalent metal cation as cofactor.

Its subcellular location is the cytoplasm. The catalysed reaction is a ribonucleoside 5'-phosphate + H2O = a ribonucleoside + phosphate. It carries out the reaction a ribonucleoside 3'-phosphate + H2O = a ribonucleoside + phosphate. The enzyme catalyses [phosphate](n) + H2O = [phosphate](n-1) + phosphate + H(+). Nucleotidase with a broad substrate specificity as it can dephosphorylate various ribo- and deoxyribonucleoside 5'-monophosphates and ribonucleoside 3'-monophosphates with highest affinity to 3'-AMP. Also hydrolyzes polyphosphate (exopolyphosphatase activity) with the preference for short-chain-length substrates (P20-25). Might be involved in the regulation of dNTP and NTP pools, and in the turnover of 3'-mononucleotides produced by numerous intracellular RNases (T1, T2, and F) during the degradation of various RNAs. This chain is 5'/3'-nucleotidase SurE, found in Photorhabdus laumondii subsp. laumondii (strain DSM 15139 / CIP 105565 / TT01) (Photorhabdus luminescens subsp. laumondii).